Here is a 1147-residue protein sequence, read N- to C-terminus: Nucleolar protein 8 (1147 aa).

One can recognise an RRM domain in the interval 8 to 89 (KRLFVGGLGQ…GTLQIQLAKE (82 aa)). Lysine 225 is covalently cross-linked (Glycyl lysine isopeptide (Lys-Gly) (interchain with G-Cter in SUMO2)). Serine 300 and serine 306 each carry phosphoserine. A Glycyl lysine isopeptide (Lys-Gly) (interchain with G-Cter in SUMO2) cross-link involves residue lysine 316. Tyrosine 362 carries the post-translational modification Phosphotyrosine. 2 positions are modified to phosphoserine: serine 364 and serine 365. The residue at position 367 (threonine 367) is a Phosphothreonine. Residues 379-401 (KVKNSAESSQPERTVSKKSSFQK) are disordered. Residues 383 to 400 (SAESSQPERTVSKKSSFQ) are compositionally biased toward polar residues. Phosphoserine is present on serine 416. Disordered regions lie at residues 427-452 (KFVN…EEYK), 472-511 (AGSH…DLYN), 592-659 (MENG…PLKA), 686-741 (KALE…EDNQ), 766-888 (ANLD…NEDE), 932-963 (KHDH…AEKL), and 986-1017 (SNTD…TLAC). Positions 441–450 (DSEESEEDEE) are enriched in acidic residues. 2 stretches are compositionally biased toward polar residues: residues 592 to 610 (MENG…TSCQ) and 629 to 650 (TFEN…STNP). Composition is skewed to basic and acidic residues over residues 700-714 (SLEK…EDPQ) and 732-741 (AKDKQAEDNQ). Serine 704 bears the Phosphoserine mark. Position 777 is a phosphothreonine (threonine 777). Serine 783 and serine 787 each carry phosphoserine. Basic and acidic residues predominate over residues 799 to 809 (CPEKELMKESV). Serine 819, serine 820, serine 825, serine 827, and serine 872 each carry phosphoserine. The span at 857 to 883 (SDERFRMDSRFLESDSEDEKKELNEDK) shows a compositional bias: basic and acidic residues. 2 coiled-coil regions span residues 868–898 (LESD…KTLN) and 937–963 (IYER…AEKL). Basic and acidic residues predominate over residues 994–1011 (DVPRTEAGAREGTGKIRN). Residue lysine 1038 forms a Glycyl lysine isopeptide (Lys-Gly) (interchain with G-Cter in SUMO2) linkage. The segment at 1055 to 1086 (PNDPRFQDSSSEEEDIAEEADHSKPSPGEAVP) is disordered. 4 positions are modified to phosphoserine: serine 1063, serine 1064, serine 1065, and serine 1080.

As to quaternary structure, interacts with the GTP form of RRAGA, RRAGC and RRAGD. Interacts with NIP7. Interacts with DDX18; the interaction is RNA-dependent. Interacts with DDX47; the interaction is RNA-dependent. In terms of processing, phosphorylated.

Its subcellular location is the nucleus. It localises to the nucleolus. Plays an essential role in the survival of diffuse-type gastric cancer cells. Acts as a nucleolar anchoring protein for DDX47. May be involved in regulation of gene expression at the post-transcriptional level or in ribosome biogenesis in cancer cells. This Mus musculus (Mouse) protein is Nucleolar protein 8.